A 509-amino-acid polypeptide reads, in one-letter code: Anaerobic nitric oxide reductase flavorubredoxin (509 aa).

A zinc metallo-hydrolase region spans residues 30 to 210 (LQGSSYNSYL…PFSRLVTAKI (181 aa)). Residues His-79, Glu-81, Asp-83, His-147, Asp-166, and His-227 each contribute to the Fe cation site. The 140-residue stretch at 254 to 393 (ITLFYDTMSN…VCREHGREIA (140 aa)) folds into the Flavodoxin-like domain. FMN-binding positions include 260–264 (TMSNN) and 342–369 (AFGS…ETTL). Residues 457–508 (SGCMQCSVCQWIYDPALGEPMQDVTPGTMWSDVPDSFLCPECGLGKDVFNPI) enclose the Rubredoxin-like domain. Cys-462, Cys-465, Cys-495, and Cys-498 together coordinate Fe cation.

In the N-terminal section; belongs to the zinc metallo-hydrolase group 3 family. Homotetramer. Requires Fe cation as cofactor. It depends on FMN as a cofactor.

The protein resides in the cytoplasm. It functions in the pathway nitrogen metabolism; nitric oxide reduction. Its function is as follows. Anaerobic nitric oxide reductase; uses NADH to detoxify nitric oxide (NO), protecting several 4Fe-4S NO-sensitive enzymes. Has at least 2 reductase partners, only one of which (NorW, flavorubredoxin reductase) has been identified. NO probably binds to the di-iron center; electrons enter from the NorW at rubredoxin and are transferred sequentially to the FMN center and the di-iron center. Also able to function as an aerobic oxygen reductase. The protein is Anaerobic nitric oxide reductase flavorubredoxin of Pectobacterium atrosepticum (strain SCRI 1043 / ATCC BAA-672) (Erwinia carotovora subsp. atroseptica).